A 245-amino-acid chain; its full sequence is 1-(5-phosphoribosyl)-5-[(5-phosphoribosylamino)methylideneamino] imidazole-4-carboxamide isomerase (245 aa).

Asp7 acts as the Proton acceptor in catalysis. The active-site Proton donor is the Asp129.

This sequence belongs to the HisA/HisF family.

It localises to the cytoplasm. It carries out the reaction 1-(5-phospho-beta-D-ribosyl)-5-[(5-phospho-beta-D-ribosylamino)methylideneamino]imidazole-4-carboxamide = 5-[(5-phospho-1-deoxy-D-ribulos-1-ylimino)methylamino]-1-(5-phospho-beta-D-ribosyl)imidazole-4-carboxamide. The protein operates within amino-acid biosynthesis; L-histidine biosynthesis; L-histidine from 5-phospho-alpha-D-ribose 1-diphosphate: step 4/9. The polypeptide is 1-(5-phosphoribosyl)-5-[(5-phosphoribosylamino)methylideneamino] imidazole-4-carboxamide isomerase (Edwardsiella ictaluri (strain 93-146)).